The sequence spans 1012 residues: DNA polymerase catalytic subunit (1012 aa).

This sequence belongs to the DNA polymerase type-B family.

It is found in the host nucleus. The enzyme catalyses DNA(n) + a 2'-deoxyribonucleoside 5'-triphosphate = DNA(n+1) + diphosphate. The protein is DNA polymerase catalytic subunit (U38) of Human herpesvirus 6A (strain Uganda-1102) (HHV-6 variant A).